We begin with the raw amino-acid sequence, 253 residues long: 5'-nucleotidase SurE (253 aa).

A divalent metal cation contacts are provided by D8, D9, S39, and N97.

The protein belongs to the SurE nucleotidase family. Requires a divalent metal cation as cofactor.

It is found in the cytoplasm. The catalysed reaction is a ribonucleoside 5'-phosphate + H2O = a ribonucleoside + phosphate. In terms of biological role, nucleotidase that shows phosphatase activity on nucleoside 5'-monophosphates. The polypeptide is 5'-nucleotidase SurE (Aeromonas hydrophila subsp. hydrophila (strain ATCC 7966 / DSM 30187 / BCRC 13018 / CCUG 14551 / JCM 1027 / KCTC 2358 / NCIMB 9240 / NCTC 8049)).